The primary structure comprises 125 residues: MATINQLVRKPRKRKVEKSAVPALQACPQRRGVCTRVYTTTPKKPNSALRKVARVRLTNGYEVSSYIGGEGHNLQEHSVVLIRGGRVKDLPGVRYHTVRGSLDTQGVQNRKQARSKYGAKRPKKA.

3-methylthioaspartic acid is present on aspartate 89. Positions 100–125 (GSLDTQGVQNRKQARSKYGAKRPKKA) are disordered. A compositionally biased stretch (basic residues) spans 111–125 (KQARSKYGAKRPKKA).

Belongs to the universal ribosomal protein uS12 family. Part of the 30S ribosomal subunit. Contacts proteins S8 and S17. May interact with IF1 in the 30S initiation complex.

In terms of biological role, with S4 and S5 plays an important role in translational accuracy. Interacts with and stabilizes bases of the 16S rRNA that are involved in tRNA selection in the A site and with the mRNA backbone. Located at the interface of the 30S and 50S subunits, it traverses the body of the 30S subunit contacting proteins on the other side and probably holding the rRNA structure together. The combined cluster of proteins S8, S12 and S17 appears to hold together the shoulder and platform of the 30S subunit. The sequence is that of Small ribosomal subunit protein uS12 from Thioalkalivibrio sulfidiphilus (strain HL-EbGR7).